We begin with the raw amino-acid sequence, 243 residues long: DNA repair protein RecO (243 aa).

The protein belongs to the RecO family.

In terms of biological role, involved in DNA repair and RecF pathway recombination. The sequence is that of DNA repair protein RecO from Bartonella quintana (strain Toulouse) (Rochalimaea quintana).